We begin with the raw amino-acid sequence, 619 residues long: Zinc finger protein 668 (619 aa).

Met-1 bears the N-acetylmethionine mark. Ser-10 is subject to Phosphoserine. A C2H2-type 1 zinc finger spans residues Tyr-22–His-44. Positions Ala-34–Ala-79 are disordered. Basic and acidic residues predominate over residues Ala-54–Gly-71. Glycyl lysine isopeptide (Lys-Gly) (interchain with G-Cter in SUMO2) cross-links involve residues Lys-57, Lys-59, Lys-65, and Lys-80. 11 consecutive C2H2-type zinc fingers follow at residues Tyr-84–His-106, Phe-112–His-134, Phe-140–His-162, Tyr-168–His-190, Tyr-196–His-218, Phe-224–His-246, Tyr-252–His-274, Phe-280–His-302, Tyr-308–His-330, Phe-336–His-358, and Phe-364–His-386. A Glycyl lysine isopeptide (Lys-Gly) (interchain with G-Cter in SUMO2) cross-link involves residue Lys-154. Ser-387 bears the Phosphoserine mark. Residues Phe-392–His-414 form a C2H2-type 13 zinc finger. A disordered region spans residues Arg-492–Pro-513. Lys-512 is covalently cross-linked (Glycyl lysine isopeptide (Lys-Gly) (interchain with G-Cter in SUMO2)). 3 C2H2-type zinc fingers span residues Phe-516–His-538, Phe-544–His-566, and Tyr-572–His-594.

The protein belongs to the krueppel C2H2-type zinc-finger protein family.

The protein resides in the nucleus. Functionally, may be involved in transcriptional regulation. May play a role in DNA repair process. The sequence is that of Zinc finger protein 668 (ZNF668) from Homo sapiens (Human).